The chain runs to 734 residues: Fc receptor-like protein 3 (734 aa).

A signal peptide spans 1–17 (MLLWLLLLILTPGREQS). Residues 18–573 (GVAPKAVLLL…GTSRNRTGLT (556 aa)) are Extracellular-facing. Ig-like C2-type domains are found at residues 21 to 98 (PKAV…VEFS), 99 to 182 (PDWL…KPLN), 192 to 270 (PVLR…HSIK), 284 to 369 (PVSN…PILS), 383 to 470 (PVLT…LRVT), and 476 to 563 (PVLT…LNVT). 6 cysteine pairs are disulfide-bonded: Cys-44-Cys-82, Cys-120-Cys-163, Cys-211-Cys-260, Cys-309-Cys-358, Cys-404-Cys-451, and Cys-497-Cys-544. Residue Asn-561 is glycosylated (N-linked (GlcNAc...) asparagine). Residues 574 to 594 (AAGITGLVLSILVLAAAAALL) form a helical membrane-spanning segment. Residues 595–734 (HYARARRKPG…VPRVLLASDH (140 aa)) lie on the Cytoplasmic side of the membrane. Residues 603–655 (PGGLSATGTSSHSPSECQEPSSSRPSRIDPQEPTHSKPLAPMELEPMYSNVNP) are disordered. A compositionally biased stretch (polar residues) spans 608–627 (ATGTSSHSPSECQEPSSSRP). The span at 628 to 637 (SRIDPQEPTH) shows a compositional bias: basic and acidic residues. 4 short sequence motifs (ITIM motif) span residues 648–653 (PMYSNV), 660–665 (PIYSQI), 690–695 (VLYSEL), and 720–725 (ENYENV). Tyr-650, Tyr-662, Tyr-692, and Tyr-722 each carry phosphotyrosine. The segment at 695–734 (LKKTHPDDSAGEASSRGRAHEEDDEENYENVPRVLLASDH) is disordered.

Interacts (via phosphorylated ITIM motifs) with phosphatases INPP5D, PTPN6 and PTPN11. Interacts (via ITIM motifs) SYK and ZAP70. Interacts with IZUMO1R/JUNO. Interacts (via extracellular domain) with IZUMO1; the interaction replaces IZUMO1R/JUNO as IZUMO1 receptor after adhesion between sperm and egg. In terms of processing, phosphorylated on cytoplasmic tyrosines; required for interaction with protein tyrosine phosphatases and protein tyrosine kinases. In terms of tissue distribution, primarily expressed in secondary lymphoid tissues by mature subsets of B-cells. Low expression on transitional B cells which increases to higher surface expression on mature and memory B-cells with innate-like features (at protein level). Expressed a low levels in naive and germinal center B-cells but also expressed in NK cells (at protein level). Expressed in unfertilized oocytes (at protein level). Expressed in a population of thymically derived naturally occurring regulatory T-cells that exhibits a memory phenotype, specialized in suppressing immune response to self-antigens. Detected in spleen, lymph node, peripheral blood lymphocytes, thymus, bone marrow, kidney, salivary gland, adrenal gland and uterus.

The protein resides in the cell membrane. The protein localises to the cell projection. It localises to the microvillus membrane. Promotes TLR9-induced B-cell proliferation, activation and survival but inhibits antibody production and suppresses plasma cell differentiation. Enhances activation of NF-kappa-B and MAPK signaling pathways in TLR9 stimulated B-cells. Has inhibitory potentional on B-cell receptor (BCR)-mediated signaling, possibly through association with SH2 domain-containing phosphatases. Inhibits cell tyrosine phosphorylation, calcium mobilization and activation-induced cell death induced through BCR signaling. Regulatory T-cells expressing FCRL3 exhibit a memory phenotype, are relatively nonresponsive to antigenic stimulation in presence of IL2 and have reduced capacity to suppress the proliferation of effector T-cells. Acts as a human-specific epitope on the cell surface of oocytes (oolemma) and plays a role during sperm-egg adhesion and fusion. Interacts with the IZUMO1-IZUMO1R/JUNO sperm-egg complex and replaces IZUMO1R/JUNO as IZUMO1 receptor during fertilization, thereby permitting species-specific gamete fusion. In Homo sapiens (Human), this protein is Fc receptor-like protein 3.